Consider the following 597-residue polypeptide: NADH-quinone oxidoreductase subunit C/D (597 aa).

The NADH dehydrogenase I subunit C stretch occupies residues 1 to 188 (MKKEIKRDDV…DPYVLNKYKE (188 aa)). Residues 211 to 597 (KYMFLNLGPN…IDFVMSDVDR (387 aa)) are NADH dehydrogenase I subunit D.

It in the N-terminal section; belongs to the complex I 30 kDa subunit family. In the C-terminal section; belongs to the complex I 49 kDa subunit family. As to quaternary structure, NDH-1 is composed of 13 different subunits. Subunits NuoB, CD, E, F, and G constitute the peripheral sector of the complex.

It localises to the cell inner membrane. It catalyses the reaction a quinone + NADH + 5 H(+)(in) = a quinol + NAD(+) + 4 H(+)(out). NDH-1 shuttles electrons from NADH, via FMN and iron-sulfur (Fe-S) centers, to quinones in the respiratory chain. The immediate electron acceptor for the enzyme in this species is believed to be ubiquinone. Couples the redox reaction to proton translocation (for every two electrons transferred, four hydrogen ions are translocated across the cytoplasmic membrane), and thus conserves the redox energy in a proton gradient. This chain is NADH-quinone oxidoreductase subunit C/D, found in Buchnera aphidicola subsp. Baizongia pistaciae (strain Bp).